We begin with the raw amino-acid sequence, 304 residues long: MSVDAVGGAVEGAPARLALRVQYLGGHFFGWQWQPGQRTVQQCLEEATERIARHPVRYHAAGRTDTGVHASGQVVHFDTHKKLAPETWVRGLNSLLPDDIAVRAAAYVSDHWHARFTALWREYRYCIHNSTVPDLFVRAQSWYYPYCPLDSEAVAAALATLPGHHDFRAFRRAGSSRPHSLVHVYTAECTREGEQIAIRVRANSFLYGMMRLLIGALAEVGSGRWSVERFAGLWQAGNREQVKYAAPPQGLCLVGVGYPDDPFKTNGIGFARCHTGQEKPEARLGNGDLESREERPPHEMSPLH.

The Nucleophile role is filled by Asp65. Tyr123 is a binding site for substrate. A disordered region spans residues 274 to 304 (HTGQEKPEARLGNGDLESREERPPHEMSPLH). The segment covering 289-298 (LESREERPPH) has biased composition (basic and acidic residues).

Belongs to the tRNA pseudouridine synthase TruA family. In terms of assembly, homodimer.

The catalysed reaction is uridine(38/39/40) in tRNA = pseudouridine(38/39/40) in tRNA. In terms of biological role, formation of pseudouridine at positions 38, 39 and 40 in the anticodon stem and loop of transfer RNAs. The polypeptide is tRNA pseudouridine synthase A (Gloeobacter violaceus (strain ATCC 29082 / PCC 7421)).